A 207-amino-acid polypeptide reads, in one-letter code: Phosphoserine phosphatase (207 aa).

Residue Asp-8 is the Nucleophile of the active site. Mg(2+) contacts are provided by Asp-8 and Asp-10. The active-site Proton donor is the Asp-10. Residues Glu-17, Arg-53, 96–97, and Lys-141 each bind substrate; that span reads SG. Mg(2+) is bound at residue Asp-164. Asn-167 contacts substrate.

Belongs to the HAD-like hydrolase superfamily. SerB family. It depends on Mg(2+) as a cofactor.

The catalysed reaction is O-phospho-L-serine + H2O = L-serine + phosphate. It catalyses the reaction O-phospho-D-serine + H2O = D-serine + phosphate. Its pathway is amino-acid biosynthesis; L-serine biosynthesis; L-serine from 3-phospho-D-glycerate: step 3/3. This chain is Phosphoserine phosphatase, found in Campylobacter jejuni subsp. doylei (strain ATCC BAA-1458 / RM4099 / 269.97).